The following is a 68-amino-acid chain: Conotoxin Cal14.13b (68 aa).

An N-terminal signal peptide occupies residues 1-20 (MKLCVVIVLLMLAMPFNGGE). The propeptide occupies 21–68 (ASRFFNQHARSQRSGMKTRGIWCDPPCPEGETCRGGECSDEFNGDMGR). M66 carries the post-translational modification Methionine amide.

In terms of processing, contains 2 disulfide bonds. As to expression, expressed by the venom duct.

It localises to the secreted. Probable neurotoxin with unknown target. Possibly targets ion channels. The polypeptide is Conotoxin Cal14.13b (Californiconus californicus (California cone)).